Reading from the N-terminus, the 435-residue chain is Light-independent protochlorophyllide reductase subunit N (435 aa).

Residues Cys23, Cys48, and Cys108 each contribute to the [4Fe-4S] cluster site.

It belongs to the BchN/ChlN family. As to quaternary structure, protochlorophyllide reductase is composed of three subunits; ChlL, ChlN and ChlB. Forms a heterotetramer of two ChlB and two ChlN subunits. The cofactor is [4Fe-4S] cluster.

The protein resides in the plastid. Its subcellular location is the chloroplast. It carries out the reaction chlorophyllide a + oxidized 2[4Fe-4S]-[ferredoxin] + 2 ADP + 2 phosphate = protochlorophyllide a + reduced 2[4Fe-4S]-[ferredoxin] + 2 ATP + 2 H2O. It participates in porphyrin-containing compound metabolism; chlorophyll biosynthesis (light-independent). Functionally, component of the dark-operative protochlorophyllide reductase (DPOR) that uses Mg-ATP and reduced ferredoxin to reduce ring D of protochlorophyllide (Pchlide) to form chlorophyllide a (Chlide). This reaction is light-independent. The NB-protein (ChlN-ChlB) is the catalytic component of the complex. This chain is Light-independent protochlorophyllide reductase subunit N, found in Chlorella vulgaris (Green alga).